The chain runs to 206 residues: Small ribosomal subunit protein uS4 (206 aa).

A disordered region spans residues 15–46; sequence MGENIWGRPKSPVNKREYGPGQHGQRRKNKLS. The region spanning 94-157 is the S4 RNA-binding domain; it reads RRLDAIVYRA…RQLAIVLEAT (64 aa).

This sequence belongs to the universal ribosomal protein uS4 family. In terms of assembly, part of the 30S ribosomal subunit. Contacts protein S5. The interaction surface between S4 and S5 is involved in control of translational fidelity.

Its function is as follows. One of the primary rRNA binding proteins, it binds directly to 16S rRNA where it nucleates assembly of the body of the 30S subunit. In terms of biological role, with S5 and S12 plays an important role in translational accuracy. This chain is Small ribosomal subunit protein uS4, found in Cereibacter sphaeroides (strain ATCC 17025 / ATH 2.4.3) (Rhodobacter sphaeroides).